The sequence spans 228 residues: MTEYLLSAGICMAIVSILLIGMAISNVSKGQYAKRFFYFATSCLVLTLVVVSSLSSSANASQTDNGVNRSGSEDPTVYSATSTKKLHKEPATLIKAIDGDTVKLMYKGQPMTFRLLLVDTPETKHPKKGVEKYGPEASAFTKKMVENAKKIEVEFDKGQRTDKYGRGLAYIYADGKMVNEALVRQGLAKVAYVYKPNNTHEQLLRKSEAQAKKEKLNIWSEDNADSGQ.

The N-terminal stretch at 1 to 23 (MTEYLLSAGICMAIVSILLIGMA) is a signal peptide. Positions 24-60 (ISNVSKGQYAKRFFYFATSCLVLTLVVVSSLSSSANA) are excised as a propeptide. The segment covering 58–70 (ANASQTDNGVNRS) has biased composition (polar residues). Positions 58 to 83 (ANASQTDNGVNRSGSEDPTVYSATST) are disordered. Asp-100 provides a ligand contact to Ca(2+). Arg-114 is an active-site residue. Asp-119 and Thr-120 together coordinate Ca(2+). Active-site residues include Glu-122 and Arg-166.

Belongs to the thermonuclease family. The cofactor is Ca(2+).

It is found in the secreted. It carries out the reaction Endonucleolytic cleavage to nucleoside 3'-phosphates and 3'-phosphooligonucleotide end-products.. Its function is as follows. Enzyme that catalyzes the hydrolysis of both DNA and RNA at the 5' position of the phosphodiester bond. This chain is Thermonuclease (nuc), found in Staphylococcus aureus (strain COL).